The chain runs to 485 residues: Poly(ADP-ribose) glycohydrolase 2 (485 aa).

Belongs to the poly(ADP-ribose) glycohydrolase family. As to expression, expressed in head and tail neurons.

The protein localises to the cytoplasm. The enzyme catalyses [(1''-&gt;2')-ADP-alpha-D-ribose](n) + H2O = [(1''-&gt;2')-ADP-alpha-D-ribose](n-1) + ADP-D-ribose. Its function is as follows. Poly(ADP-ribose) synthesized after DNA damage is only present transiently and is rapidly degraded by poly(ADP-ribose) glycohydrolase. Poly(ADP-ribose) metabolism may be required for maintenance of the normal function of neuronal cells. The protein is Poly(ADP-ribose) glycohydrolase 2 of Caenorhabditis elegans.